The chain runs to 146 residues: Hemoglobin subunit beta (146 aa).

V1 bears the N-acetylvaline mark. Residues 2–146 form the Globin domain; the sequence is HLTPEEKNAV…VANALAHKYH (145 aa). T12 is subject to Phosphothreonine. S44 carries the post-translational modification Phosphoserine. At K59 the chain carries N6-acetyllysine. Position 63 (H63) interacts with heme b. K82 carries the N6-acetyllysine modification. H92 contributes to the heme b binding site. S-nitrosocysteine is present on C93. K144 is subject to N6-acetyllysine.

Belongs to the globin family. As to quaternary structure, heterotetramer of two alpha chains and two beta chains. As to expression, red blood cells.

Involved in oxygen transport from the lung to the various peripheral tissues. In Papio cynocephalus (Yellow baboon), this protein is Hemoglobin subunit beta (HBB).